The following is a 134-amino-acid chain: MSWQAYVDDHLMCDIEGHEGHRLTAAAIVGQDGSVWAQSATFPQFKPEEMNGIMTDFNEPGHLAPTGLHLGGTKYMVIQGEAGAVIRGKKGSGGITIKKTGQALVFGIYEEPVTPGQCNMVVERLGDYLIEQGL.

Residues cysteine 13 and cysteine 118 are joined by a disulfide bond. The Involved in PIP2 interaction signature appears at 84 to 100 (AVIRGKKGSGGITIKKT). A Phosphothreonine modification is found at threonine 114.

This sequence belongs to the profilin family. As to quaternary structure, occurs in many kinds of cells as a complex with monomeric actin in a 1:1 ratio. Phosphorylated by MAP kinases.

The protein localises to the cytoplasm. Its subcellular location is the cytoskeleton. Its function is as follows. Binds to actin and affects the structure of the cytoskeleton. At high concentrations, profilin prevents the polymerization of actin, whereas it enhances it at low concentrations. This is Profilin-2 from Olea europaea (Common olive).